Consider the following 157-residue polypeptide: Protein Smg (157 aa).

It belongs to the Smg family.

The protein is Protein Smg of Sodalis glossinidius (strain morsitans).